We begin with the raw amino-acid sequence, 266 residues long: Cell division cycle-associated protein 3 (266 aa).

The segment at 1–84 (MGSTQSVSGT…TPMKISGPDP (84 aa)) is disordered. Ser29 and Ser31 each carry phosphoserine. The span at 32 to 46 (AGIQRTPIQVESSPQ) shows a compositional bias: polar residues. The residue at position 37 (Thr37) is a Phosphothreonine. Residues Ser44 and Ser67 each carry the phosphoserine modification. Thr75 is modified (phosphothreonine). The F-box-like stretch occupies residues 90 to 119 (KELSEVLETEASESISSPELALPRETPLFY). Ser93 carries the post-translational modification Phosphoserine. 2 disordered regions span residues 120 to 225 (DLDL…LSEN) and 242 to 266 (KAGG…LLES). Basic and acidic residues predominate over residues 143 to 156 (LDPKQVFTKEEAKQ). Over residues 157-168 (SAETIAASQNSD) the composition is skewed to polar residues. Ser197 is modified (phosphoserine). Thr200 is subject to Phosphothreonine. Polar residues predominate over residues 203-213 (QDDNSPGTLTL). Position 207 is a phosphoserine (Ser207). Residue Thr210 is modified to Phosphothreonine. The span at 250–259 (PNQDHDKENQ) shows a compositional bias: basic and acidic residues. The short motif at 256–258 (KEN) is the KEN box element.

Interacts with SKP1. Part of a SCF (SKP1-cullin-F-box) protein ligase complex. In terms of processing, ubiquitinated and degraded by the APC/C-Cdh1 complex.

The protein localises to the cytoplasm. It is found in the cytosol. The protein operates within protein modification; protein ubiquitination. In terms of biological role, F-box-like protein which is required for entry into mitosis. Acts by participating in E3 ligase complexes that mediate the ubiquitination and degradation of WEE1 kinase at G2/M phase. In Mus musculus (Mouse), this protein is Cell division cycle-associated protein 3 (Cdca3).